Reading from the N-terminus, the 125-residue chain is Putative oxygen-evolving enhancer protein 2-2 (125 aa).

At Ser15 the chain carries Phosphoserine.

This sequence belongs to the PsbP family.

In Arabidopsis thaliana (Mouse-ear cress), this protein is Putative oxygen-evolving enhancer protein 2-2 (PSBP2).